Reading from the N-terminus, the 574-residue chain is GRB2-associated-binding protein 4 (574 aa).

The disordered stretch occupies residues 1-33 (MSLPSPSPSRELCPPDPAFAPLSSWPGSGPAGG). The 114-residue stretch at 39-152 (HVLYSGWLRK…WVQSICQICG (114 aa)) folds into the PH domain. Disordered regions lie at residues 176–200 (PAEPSCSHQHLPQEQEPTSEPPVSH), 215–234 (LRSHQHASQRAEHARSASFS), 293–331 (SLASHGHTRGSLTGSEADNEASSGKYTQHGGGNASRPAE), and 418–513 (PPVN…PRST). Over residues 181–193 (CSHQHLPQEQEPT) the composition is skewed to polar residues. Composition is skewed to polar residues over residues 302–318 (GSLTGSEADNEASSGKY) and 424–442 (LKPNQKANPTPPNLRNNRV). A compositionally biased stretch (low complexity) spans 457-478 (SGTSHTFDSSSSQHPISTQSIT). The segment covering 502–513 (GGTSSSAPPRST) has biased composition (polar residues).

This sequence belongs to the GAB family.

The polypeptide is GRB2-associated-binding protein 4 (GAB4) (Homo sapiens (Human)).